The primary structure comprises 190 residues: MADSIIQSPELGDVTGYLRERIRTVPDWPMPGVMFRDITPLLQNPKTLRVLIDVFVHRYMDAQLDLVAGIDARGFILGAIVAYELNLGFVPIRKKGKLPFQTVAEEYELEYGSATVEIHADACKSGDRVLLVDDLIATGGTMMAGLKLLERLGATVVEGAAIVDLPELGGSKLLQDGGLPLFTVCKFEGH.

The protein belongs to the purine/pyrimidine phosphoribosyltransferase family. As to quaternary structure, homodimer.

The protein resides in the cytoplasm. The enzyme catalyses AMP + diphosphate = 5-phospho-alpha-D-ribose 1-diphosphate + adenine. It functions in the pathway purine metabolism; AMP biosynthesis via salvage pathway; AMP from adenine: step 1/1. In terms of biological role, catalyzes a salvage reaction resulting in the formation of AMP, that is energically less costly than de novo synthesis. In Cupriavidus necator (strain ATCC 17699 / DSM 428 / KCTC 22496 / NCIMB 10442 / H16 / Stanier 337) (Ralstonia eutropha), this protein is Adenine phosphoribosyltransferase.